Here is a 249-residue protein sequence, read N- to C-terminus: Solute carrier family 25 member 35 (249 aa).

Solcar repeat units lie at residues 1–90 and 152–243; these read MDFL…AEAG and QSWK…LRMV. The next 4 membrane-spanning stretches (helical) occupy residues 38–58, 59–79, 154–174, and 226–249; these read TYQRHYRNVFHAFITIGKVDG, LAALQRGLAPALLYQFLMNGI, WKVALAAAMVSGIAVVLAMTP, and LGPHTILSLFFWDQLRMVYYTYTK.

The protein belongs to the mitochondrial carrier (TC 2.A.29) family.

It is found in the mitochondrion inner membrane. It carries out the reaction a dicarboxylate(in) + sulfate(out) = a dicarboxylate(out) + sulfate(in). Its function is as follows. Putative antiporter that exchanges dicarboxylates and sulfur oxoanions across the inner membrane of mitochondria. This chain is Solute carrier family 25 member 35 (SLC25A35), found in Bos taurus (Bovine).